Consider the following 104-residue polypeptide: Fusaric acid biosynthesis protein 2 (104 aa).

The protein belongs to the YciI family.

It functions in the pathway mycotoxin biosynthesis. Its function is as follows. Part of the gene cluster that mediates the biosynthesis of fusaric acid, a mycotoxin with low to moderate toxicity to animals and humans, but with high phytotoxic properties. L-aspartate is suggested as fusaric acid amino acid precursor that is activated and further processed to O-acetyl-L-homoserine by cluster enzymes aspartate kinase FUB3 and homoserine O-acetyltransferase FUB5, as well as enzymes of the primary metabolism. The polyketide synthase (PKS) FUB1 generates the triketide trans-2-hexenal which is presumptively released by the hydrolase FUB4 and linked to the NRPS-bound amino acid precursor by NAD(P)-dependent dehydrogenase FUB6. FUB1, FUB4, and the non-canonical NRPS Fub8 may form an enzyme complex. Further processing of the NRPS-bound intermediate might be carried out by FUB6 and the sulfhydrylase FUB7, enabling a spontaneous electrocyclization to close the carbon backbone of fusaric acid. Dihydrofusaric acid is likely to be released via reduction by the thioester reductase (TR) domain of FUB8 whereupon the final oxidation to fusaric acid may (also) be performed by the FMN-dependent dehydrogenase FUB9. The protein is Fusaric acid biosynthesis protein 2 of Gibberella fujikuroi (strain CBS 195.34 / IMI 58289 / NRRL A-6831) (Bakanae and foot rot disease fungus).